The sequence spans 122 residues: Urocortin (122 aa).

The N-terminal stretch at 1 to 25 (MRQRGRATLLVALLLLVQLRPESSQ) is a signal peptide. A propeptide spanning residues 26-80 (WSPAAAAANVVQDPNLRWNPGVRNQGGGVRALLLLLAERFPRRAGSEPAGERQRR) is cleaved from the precursor. A Valine amide modification is found at Val-120.

The protein belongs to the sauvagine/corticotropin-releasing factor/urotensin I family. As to quaternary structure, interacts with CRHR1 and CRHR2 (via their N-terminal extracellular domain).

It is found in the secreted. In terms of biological role, acts in vitro to stimulate the secretion of adrenocorticotropic hormone (ACTH). Binds with high affinity to CRF receptor types 1, 2-alpha, and 2-beta. Plays a role in the establishment of normal hearing thresholds. Reduces food intake and regulates ghrelin levels in gastric body and plasma. The chain is Urocortin (Ucn) from Rattus norvegicus (Rat).